The primary structure comprises 50 residues: Ornatin-E (50 aa).

The Cell attachment site motif lies at 42–44 (RGD).

Belongs to the ornatin family.

The protein localises to the secreted. In terms of biological role, potent inhibitor of fibrinogen interaction with platelet receptors expressed on glycoprotein IIb-IIIa complex. May prevent blood from clotting during either feeding and/or storage of ingested blood. This is Ornatin-E from Placobdella ornata (Turtle leech).